The primary structure comprises 325 residues: MQITVREALRDAMQEEMIRDDKVFVMGEEVAEYQGAYKVTQGLLEQFGPKRVIDTPITEYGFAGLAVGAAFAGLRPIVEFMTFNFAMQAMDHIVNSAAKTHYMSGGQVRCPIVFRGPNGAASRVAAQHSQNYAACYSYIPGLKVVAPYSAEDHKGLMITAIRDDNPVIFLENEILYGHSFDISENVEPIPFGKAKVLKEGDSVTIVTFSIQVKLALDAANILQSDNINCEVIDLRTIKPLDIDTIIESVKKTGRLVVIEEGWFFAGIGATIAAIVMKEAFDYLDAPVEIVSGKDVPLPYAVNLEKLALPSEYDVINAVKKVCYIK.

A thiamine diphosphate-binding site is contributed by Glu59.

As to quaternary structure, heterodimer of an alpha and a beta chain. Requires thiamine diphosphate as cofactor.

The enzyme catalyses N(6)-[(R)-lipoyl]-L-lysyl-[protein] + pyruvate + H(+) = N(6)-[(R)-S(8)-acetyldihydrolipoyl]-L-lysyl-[protein] + CO2. The pyruvate dehydrogenase complex catalyzes the overall conversion of pyruvate to acetyl-CoA and CO(2). It contains multiple copies of three enzymatic components: pyruvate dehydrogenase (E1), dihydrolipoamide acetyltransferase (E2) and lipoamide dehydrogenase (E3). The sequence is that of Pyruvate dehydrogenase E1 component subunit beta (pdhB) from Rickettsia bellii (strain RML369-C).